The sequence spans 363 residues: Phospho-N-acetylmuramoyl-pentapeptide-transferase (363 aa).

10 helical membrane-spanning segments follow: residues 3 to 23 (TVLI…PLYI), 55 to 75 (VVII…TGAL), 76 to 96 (PTVS…VGFL), 116 to 136 (LAGQ…FPAA), 158 to 178 (LAVF…LIIT), 190 to 210 (GLDG…VLIC), 237 to 257 (LAVV…WNAS), 261 to 281 (IFMG…LAIL), 286 to 306 (ILLV…ILQV), and 340 to 360 (FWII…AEWV).

It belongs to the glycosyltransferase 4 family. MraY subfamily. Requires Mg(2+) as cofactor.

The protein localises to the cell membrane. It catalyses the reaction UDP-N-acetyl-alpha-D-muramoyl-L-alanyl-gamma-D-glutamyl-meso-2,6-diaminopimeloyl-D-alanyl-D-alanine + di-trans,octa-cis-undecaprenyl phosphate = di-trans,octa-cis-undecaprenyl diphospho-N-acetyl-alpha-D-muramoyl-L-alanyl-D-glutamyl-meso-2,6-diaminopimeloyl-D-alanyl-D-alanine + UMP. Its pathway is cell wall biogenesis; peptidoglycan biosynthesis. Its function is as follows. Catalyzes the initial step of the lipid cycle reactions in the biosynthesis of the cell wall peptidoglycan: transfers peptidoglycan precursor phospho-MurNAc-pentapeptide from UDP-MurNAc-pentapeptide onto the lipid carrier undecaprenyl phosphate, yielding undecaprenyl-pyrophosphoryl-MurNAc-pentapeptide, known as lipid I. The sequence is that of Phospho-N-acetylmuramoyl-pentapeptide-transferase from Kineococcus radiotolerans (strain ATCC BAA-149 / DSM 14245 / SRS30216).